Reading from the N-terminus, the 139-residue chain is D-ribose pyranase (139 aa).

The Proton donor role is filled by histidine 20. Substrate is bound by residues aspartate 28, histidine 106, and 128–130; that span reads FAN.

The protein belongs to the RbsD / FucU family. RbsD subfamily. Homodecamer.

It is found in the cytoplasm. It carries out the reaction beta-D-ribopyranose = beta-D-ribofuranose. It participates in carbohydrate metabolism; D-ribose degradation; D-ribose 5-phosphate from beta-D-ribopyranose: step 1/2. Its function is as follows. Catalyzes the interconversion of beta-pyran and beta-furan forms of D-ribose. The sequence is that of D-ribose pyranase from Yersinia pseudotuberculosis serotype O:1b (strain IP 31758).